A 167-amino-acid polypeptide reads, in one-letter code: Ureidoglycolate lyase (167 aa).

This sequence belongs to the ureidoglycolate lyase family. In terms of assembly, homodimer. The cofactor is Ni(2+).

The enzyme catalyses (S)-ureidoglycolate = urea + glyoxylate. The protein operates within nitrogen metabolism; (S)-allantoin degradation. Its function is as follows. Catalyzes the catabolism of the allantoin degradation intermediate (S)-ureidoglycolate, generating urea and glyoxylate. Involved in the utilization of allantoin as nitrogen source. The polypeptide is Ureidoglycolate lyase (Pseudomonas fluorescens (strain ATCC BAA-477 / NRRL B-23932 / Pf-5)).